The sequence spans 202 residues: Outer-membrane lipoprotein carrier protein (202 aa).

An N-terminal signal peptide occupies residues 1 to 21 (MKRLLVACCFLSGLISASALA).

Belongs to the LolA family. In terms of assembly, monomer.

The protein resides in the periplasm. Functionally, participates in the translocation of lipoproteins from the inner membrane to the outer membrane. Only forms a complex with a lipoprotein if the residue after the N-terminal Cys is not an aspartate (The Asp acts as a targeting signal to indicate that the lipoprotein should stay in the inner membrane). This Yersinia pestis bv. Antiqua (strain Antiqua) protein is Outer-membrane lipoprotein carrier protein.